A 296-amino-acid chain; its full sequence is Acetylglutamate kinase (296 aa).

Substrate contacts are provided by residues 69-70 (GG), Arg-91, and Asn-193.

This sequence belongs to the acetylglutamate kinase family. ArgB subfamily.

It localises to the cytoplasm. It catalyses the reaction N-acetyl-L-glutamate + ATP = N-acetyl-L-glutamyl 5-phosphate + ADP. It participates in amino-acid biosynthesis; L-arginine biosynthesis; N(2)-acetyl-L-ornithine from L-glutamate: step 2/4. Catalyzes the ATP-dependent phosphorylation of N-acetyl-L-glutamate. The polypeptide is Acetylglutamate kinase (Albidiferax ferrireducens (strain ATCC BAA-621 / DSM 15236 / T118) (Rhodoferax ferrireducens)).